A 204-amino-acid polypeptide reads, in one-letter code: MGNVSVAVGTAVGIPIAVGVIIALIFWCKLQRRYKKEEIRDADLEKMVMEEVAVSVYDGFKAEINSSSEASTINEKEANQDLKPCQEKTAKAGYTPAYRRQLNASMGTLRPKKQSTAYINVPVIFSGEKVNYGMVRDPSYSFMYPLTLSRKETSSLRSASTSNLSSSTENTALHEEIKLDDPYENDFTNYTVNKREFIDSLRPR.

The helical transmembrane segment at 6-26 threads the bilayer; it reads VAVGTAVGIPIAVGVIIALIF.

Belongs to the SKG1 family.

It localises to the vacuole membrane. Its function is as follows. Involved in cell cycle progression and surviving DNA damage. The protein is Altered inheritance of mitochondria protein 20 (AIM20) of Saccharomyces cerevisiae (strain JAY291) (Baker's yeast).